A 347-amino-acid chain; its full sequence is NADH-ubiquinone oxidoreductase chain 2 (347 aa).

9 helical membrane-spanning segments follow: residues 5–22 (ILTI…MVLI), 26–45 (WLTV…PILM), 60–80 (FLTQ…NLLL), 150–170 (NPNL…WGGL), 178–198 (ILAY…TYNP), 200–220 (LMML…MLFM), 242–262 (SLIL…GFIP), 274–294 (NMII…YFYM), and 324–344 (TLLP…PMML).

This sequence belongs to the complex I subunit 2 family. Core subunit of respiratory chain NADH dehydrogenase (Complex I) which is composed of 45 different subunits. Interacts with TMEM242.

It localises to the mitochondrion inner membrane. It carries out the reaction a ubiquinone + NADH + 5 H(+)(in) = a ubiquinol + NAD(+) + 4 H(+)(out). Its function is as follows. Core subunit of the mitochondrial membrane respiratory chain NADH dehydrogenase (Complex I) which catalyzes electron transfer from NADH through the respiratory chain, using ubiquinone as an electron acceptor. Essential for the catalytic activity and assembly of complex I. This chain is NADH-ubiquinone oxidoreductase chain 2, found in Martes flavigula (Yellow-throated marten).